The following is a 339-amino-acid chain: Exopolyphosphatase 1 (339 aa).

The segment at 315 to 339 (QTSVRDTRGQEVDRNAANRSRGDKT) is disordered. Basic and acidic residues predominate over residues 319–339 (RDTRGQEVDRNAANRSRGDKT).

The protein belongs to the GppA/Ppx family. In terms of assembly, homodimer.

It carries out the reaction [phosphate](n) + H2O = [phosphate](n-1) + phosphate + H(+). Its function is as follows. Degradation of inorganic polyphosphates (polyP). Releases orthophosphate processively from the ends of the polyP chain. The protein is Exopolyphosphatase 1 of Mycobacterium leprae (strain TN).